Reading from the N-terminus, the 73-residue chain is Homeodomain-only protein (73 aa).

The segment at residues 3–62 (AETASGPTEDQVEILEYNFNKVDKHPDSTTLCLIAAEAGLSEEETQKWFKQRLAKWRRSE) is a DNA-binding region (homeobox; degenerate).

Interacts with serum response factor (SRF). Component of a large complex containing histone deacetylases such as HDAC2. Interacts with the acetylated forms of HSPA1A and HSPA1B. Interacts with HSPA8. Widely expressed. Expressed in the heart, brain, placenta, lung, skeletal and smooth muscles, uterus, urinary bladder, kidney and spleen. Down-regulated in some types of cancer such as lung cancer, choriocarcinoma, head and neck squamous cell carcinoma and oral squamous cell carcinoma.

The protein resides in the nucleus. It localises to the cytoplasm. In terms of biological role, atypical homeodomain protein which does not bind DNA and is required to modulate cardiac growth and development. Acts via its interaction with SRF, thereby modulating the expression of SRF-dependent cardiac-specific genes and cardiac development. Prevents SRF-dependent transcription either by inhibiting SRF binding to DNA or by recruiting histone deacetylase (HDAC) proteins that prevent transcription by SRF. Overexpression causes cardiac hypertrophy. May act as a tumor suppressor. Acts as a co-chaperone for HSPA1A and HSPA1B chaperone proteins and assists in chaperone-mediated protein refolding. The polypeptide is Homeodomain-only protein (HOPX) (Homo sapiens (Human)).